Consider the following 271-residue polypeptide: Cyclic AMP-dependent transcription factor ATF-1 (271 aa).

Residues 1-61 (MEDSHKSTTS…QKAHGILARR (61 aa)) are disordered. One can recognise a KID domain in the interval 31–90 (QVSSLSESEESQDSSDSIGSSQKAHGILARRPSYRKILKDLSSEDTRGRKGDGENSGVSA). S63 is modified (phosphoserine; by CaMK1, CDK3, RPS6KA4 and RPS6KA5). S198 is subject to Phosphoserine; by HIPK2. Glycyl lysine isopeptide (Lys-Gly) (interchain with G-Cter in SUMO2) cross-links involve residues K208 and K215. The bZIP domain occupies 213-271 (QLKREIRLMKNREAARECRRKKKEYVKCLENRVAVLENQNKTLIEELKTLKDLYSNKSV). The tract at residues 215 to 239 (KREIRLMKNREAARECRRKKKEYVK) is basic motif. A leucine-zipper region spans residues 241–262 (LENRVAVLENQNKTLIEELKTL).

This sequence belongs to the bZIP family. ATF subfamily. In terms of assembly, binds DNA as a dimer. Interacts with HIPK2 and CDK3. Interacts with MOTS-c, a peptide produced by the mitochondrially encoded 12S rRNA MT-RNR1; the interaction occurs in the nucleus following metabolic stress. In terms of processing, phosphorylated at Ser-198 by HIPK2 in response to genotoxic stress. This phosphorylation promotes transcription repression of FTH1 and other antioxidant detoxification genes. The CDK3-mediated phosphorylation at Ser-63 promotes its transactivation and transcriptional activities. Phosphorylated at Ser-63 by RPS6KA4 and RPS6KA5 in response to mitogenic or stress stimuli.

The protein localises to the nucleus. Functionally, this protein binds the cAMP response element (CRE) (consensus: 5'-GTGACGT[AC][AG]-3'), a sequence present in many viral and cellular promoters. Binds to the Tax-responsive element (TRE) of HTLV-I. Mediates PKA-induced stimulation of CRE-reporter genes. Represses the expression of FTH1 and other antioxidant detoxification genes. Triggers cell proliferation and transformation. The chain is Cyclic AMP-dependent transcription factor ATF-1 (ATF1) from Homo sapiens (Human).